Consider the following 131-residue polypeptide: Arsenate reductase 2 (131 aa).

Active-site nucleophile residues include C10, C82, and C89. Disulfide bonds link C10/C82 and C82/C89.

This sequence belongs to the low molecular weight phosphotyrosine protein phosphatase family. Thioredoxin-coupled ArsC subfamily.

It is found in the cytoplasm. The catalysed reaction is arsenate + [thioredoxin]-dithiol + H(+) = arsenite + [thioredoxin]-disulfide + H2O. Its function is as follows. Catalyzes the reduction of arsenate [As(V)] to arsenite [As(III)]. The sequence is that of Arsenate reductase 2 from Staphylococcus saprophyticus subsp. saprophyticus (strain ATCC 15305 / DSM 20229 / NCIMB 8711 / NCTC 7292 / S-41).